The following is a 247-amino-acid chain: NAD(P)H-quinone oxidoreductase subunit K (247 aa).

[4Fe-4S] cluster is bound by residues Cys63, Cys64, Cys128, and Cys159.

Belongs to the complex I 20 kDa subunit family. NDH-1 can be composed of about 15 different subunits; different subcomplexes with different compositions have been identified which probably have different functions. The cofactor is [4Fe-4S] cluster.

It is found in the cellular thylakoid membrane. The catalysed reaction is a plastoquinone + NADH + (n+1) H(+)(in) = a plastoquinol + NAD(+) + n H(+)(out). The enzyme catalyses a plastoquinone + NADPH + (n+1) H(+)(in) = a plastoquinol + NADP(+) + n H(+)(out). Its function is as follows. NDH-1 shuttles electrons from an unknown electron donor, via FMN and iron-sulfur (Fe-S) centers, to quinones in the respiratory and/or the photosynthetic chain. The immediate electron acceptor for the enzyme in this species is believed to be plastoquinone. Couples the redox reaction to proton translocation, and thus conserves the redox energy in a proton gradient. Cyanobacterial NDH-1 also plays a role in inorganic carbon-concentration. This is NAD(P)H-quinone oxidoreductase subunit K from Microcystis aeruginosa (strain NIES-843 / IAM M-2473).